A 70-amino-acid chain; its full sequence is Putative defensin-like protein 280 (70 aa).

The signal sequence occupies residues 1 to 23; it reads MASIKHFFLVFICVSVLLTSGLA. 3 disulfides stabilise this stretch: Cys-30/Cys-53, Cys-39/Cys-65, and Cys-43/Cys-67.

The protein belongs to the DEFL family.

It is found in the secreted. In Arabidopsis thaliana (Mouse-ear cress), this protein is Putative defensin-like protein 280.